The following is a 204-amino-acid chain: Peptide deformylase (204 aa).

Residues C131 and H174 each coordinate Fe cation. Residue E175 is part of the active site. H178 contacts Fe cation.

It belongs to the polypeptide deformylase family. Requires Fe(2+) as cofactor.

The enzyme catalyses N-terminal N-formyl-L-methionyl-[peptide] + H2O = N-terminal L-methionyl-[peptide] + formate. Removes the formyl group from the N-terminal Met of newly synthesized proteins. Requires at least a dipeptide for an efficient rate of reaction. N-terminal L-methionine is a prerequisite for activity but the enzyme has broad specificity at other positions. This chain is Peptide deformylase, found in Streptococcus equi subsp. zooepidemicus (strain H70).